The chain runs to 440 residues: 3-phosphoshikimate 1-carboxyvinyltransferase (440 aa).

Residues Lys-26, Ser-27, and Arg-31 each coordinate 3-phosphoshikimate. Lys-26 is a binding site for phosphoenolpyruvate. Residues Gly-100 and Arg-134 each contribute to the phosphoenolpyruvate site. Residues Ser-180, Ser-181, Gln-182, Ser-208, Asp-323, Asn-346, and Lys-350 each coordinate 3-phosphoshikimate. Phosphoenolpyruvate is bound at residue Gln-182. Catalysis depends on Asp-323, which acts as the Proton acceptor. Phosphoenolpyruvate-binding residues include Arg-354, Arg-398, and Lys-423.

This sequence belongs to the EPSP synthase family. Monomer.

It is found in the cytoplasm. The enzyme catalyses 3-phosphoshikimate + phosphoenolpyruvate = 5-O-(1-carboxyvinyl)-3-phosphoshikimate + phosphate. It functions in the pathway metabolic intermediate biosynthesis; chorismate biosynthesis; chorismate from D-erythrose 4-phosphate and phosphoenolpyruvate: step 6/7. In terms of biological role, catalyzes the transfer of the enolpyruvyl moiety of phosphoenolpyruvate (PEP) to the 5-hydroxyl of shikimate-3-phosphate (S3P) to produce enolpyruvyl shikimate-3-phosphate and inorganic phosphate. The protein is 3-phosphoshikimate 1-carboxyvinyltransferase of Pasteurella multocida (strain Pm70).